Reading from the N-terminus, the 337-residue chain is Fructose-1,6-bisphosphatase class 1 (337 aa).

Positions 89, 112, 114, and 115 each coordinate Mg(2+). Substrate is bound by residues 115–118 (DGSS), Asn208, Tyr241, and Lys271. A Mg(2+)-binding site is contributed by Glu277.

It belongs to the FBPase class 1 family. As to quaternary structure, homotetramer. It depends on Mg(2+) as a cofactor.

Its subcellular location is the cytoplasm. The enzyme catalyses beta-D-fructose 1,6-bisphosphate + H2O = beta-D-fructose 6-phosphate + phosphate. Its pathway is carbohydrate biosynthesis; gluconeogenesis. This Yersinia pseudotuberculosis serotype O:1b (strain IP 31758) protein is Fructose-1,6-bisphosphatase class 1.